The following is a 79-amino-acid chain: Aquaporin Z (79 aa).

2 consecutive transmembrane segments (helical) span residues 4-24 (LFAE…SAVF) and 33-53 (IGFA…AYAV). An NPA 1 motif is present at residues 62–64 (NPA).

This sequence belongs to the MIP/aquaporin (TC 1.A.8) family. Homotetramer.

The protein resides in the cell membrane. The catalysed reaction is H2O(in) = H2O(out). Functionally, channel that permits osmotically driven movement of water in both directions. It is involved in the osmoregulation and in the maintenance of cell turgor during volume expansion in rapidly growing cells. It mediates rapid entry or exit of water in response to abrupt changes in osmolarity. This chain is Aquaporin Z, found in Flavobacterium johnsoniae (Cytophaga johnsonae).